Consider the following 325-residue polypeptide: Plasminogen (325 aa).

Kringle domains follow at residues 80-146 and 159-217; these read ACVK…VPSC and LTPA…VLSV. 4 cysteine pairs are disulfide-bonded: Cys81–Cys146, Cys102–Cys135, Cys124–Cys141, and Cys188–Cys212.

This sequence belongs to the peptidase S1 family. Plasminogen subfamily.

It is found in the secreted. It carries out the reaction Preferential cleavage: Lys-|-Xaa &gt; Arg-|-Xaa, higher selectivity than trypsin. Converts fibrin into soluble products.. In terms of biological role, plasmin dissolves the fibrin of blood clots and acts as a proteolytic factor in a variety of other processes including embryonic development, tissue remodeling, tumor invasion, and inflammation. The sequence is that of Plasminogen from Petromyzon marinus (Sea lamprey).